Reading from the N-terminus, the 168-residue chain is Outer-membrane lipoprotein YfiB (168 aa).

The signal sequence occupies residues 1–25; sequence MLPQRLHPSRLLALALFSLVLGLAG. A lipid anchor (N-palmitoyl cysteine) is attached at Cys-26. Cys-26 carries S-diacylglycerol cysteine lipidation. An OmpA-like domain is found at 53–168; that stretch reads EGWEFGMSSK…RRVAIIVPAE (116 aa).

This sequence belongs to the outer membrane OOP (TC 1.B.6) superfamily. Homodimer. Interacts with YfiR. The YfiB-YfiR complex is a 2:2 heterotetramer.

The protein resides in the cell outer membrane. Both lipid anchor in the outer membrane and peptidoglycan binding are required for full activity. Once activated by certain cell stress, the dimeric YfiB transforms from a compact conformation to a stretched conformation, allowing the periplasmic domain of the membrane-anchored YfiB to penetrate the cell wall and sequester the YfiR dimer. GMP enhances the binding affinity between YfiB and YfiR. In terms of biological role, activates the diguanylate cyclase TpbB/YfiN by sequestering YfiR at the outer membrane, which counteracts the YfiR-mediated repression of TpbB/YfiN at the inner membrane and leads to increased c-di-GMP production. May act as a sensor of envelope stress. Part of the YfiB-TpbB-YfiR (or yfiBNR) system, encoding a tripartite signaling module that modulates intracellular c-di-GMP levels. The system is a key regulator of the small colony variant (SCV) phenotype, and plays an important role in biofilm formation and in vivo persistence. The c-di-GMP produced by TpbB/YfiN stimulates the production of the Pel and Psl exopolysaccharides, which promotes surface attachment, generates an SCV phenotype and confers resistance against phagocytosis. This is Outer-membrane lipoprotein YfiB from Pseudomonas aeruginosa (strain ATCC 15692 / DSM 22644 / CIP 104116 / JCM 14847 / LMG 12228 / 1C / PRS 101 / PAO1).